Reading from the N-terminus, the 622-residue chain is Cilia- and flagella-associated protein 206 (622 aa).

A disordered region spans residues 570–592 (SQVYPPKDTSTQSMREDSTGVPR).

Belongs to the CFAP206 family.

The protein localises to the cytoplasm. The protein resides in the cytoskeleton. It is found in the cilium axoneme. It localises to the cilium basal body. Its function is as follows. Essential for sperm motility and is involved in the regulation of the beating frequency of motile cilia on the epithelial cells of the respiratory tract. Required for the establishment of radial spokes in sperm flagella. The polypeptide is Cilia- and flagella-associated protein 206 (Homo sapiens (Human)).